The primary structure comprises 352 residues: Chorismate synthase (352 aa).

2 residues coordinate NADP(+): R48 and R54. FMN is bound by residues 125–127 (RSS), 238–239 (NA), G278, 293–297 (KPTSS), and R319.

The protein belongs to the chorismate synthase family. Homotetramer. The cofactor is FMNH2.

The enzyme catalyses 5-O-(1-carboxyvinyl)-3-phosphoshikimate = chorismate + phosphate. It participates in metabolic intermediate biosynthesis; chorismate biosynthesis; chorismate from D-erythrose 4-phosphate and phosphoenolpyruvate: step 7/7. In terms of biological role, catalyzes the anti-1,4-elimination of the C-3 phosphate and the C-6 proR hydrogen from 5-enolpyruvylshikimate-3-phosphate (EPSP) to yield chorismate, which is the branch point compound that serves as the starting substrate for the three terminal pathways of aromatic amino acid biosynthesis. This reaction introduces a second double bond into the aromatic ring system. This Bordetella avium (strain 197N) protein is Chorismate synthase.